The following is a 368-amino-acid chain: tRNA-specific 2-thiouridylase MnmA (368 aa).

ATP-binding positions include 11-18 and Met37; that span reads GMSGGVDS. The segment at 97–99 is interaction with target base in tRNA; it reads NPD. Cys102 (nucleophile) is an active-site residue. The cysteines at positions 102 and 199 are disulfide-linked. Gly127 lines the ATP pocket. Residues 149–151 are interaction with tRNA; it reads KDQ. Cys199 serves as the catalytic Cysteine persulfide intermediate. The interval 311–312 is interaction with tRNA; sequence RY.

It belongs to the MnmA/TRMU family. In terms of assembly, interacts with TusE.

It localises to the cytoplasm. It carries out the reaction S-sulfanyl-L-cysteinyl-[protein] + uridine(34) in tRNA + AH2 + ATP = 2-thiouridine(34) in tRNA + L-cysteinyl-[protein] + A + AMP + diphosphate + H(+). Functionally, catalyzes the 2-thiolation of uridine at the wobble position (U34) of tRNA(Lys), tRNA(Glu) and tRNA(Gln), leading to the formation of s(2)U34, the first step of tRNA-mnm(5)s(2)U34 synthesis. Sulfur is provided by IscS, via a sulfur-relay system. Binds ATP and its substrate tRNAs. The chain is tRNA-specific 2-thiouridylase MnmA from Salmonella arizonae (strain ATCC BAA-731 / CDC346-86 / RSK2980).